Here is a 199-residue protein sequence, read N- to C-terminus: GTP cyclohydrolase-2 (199 aa).

49-53 lines the GTP pocket; it reads RVHSE. 3 residues coordinate Zn(2+): Cys54, Cys65, and Cys67. Residues Gln70, 92–94, and Thr114 each bind GTP; that span reads EGR. Catalysis depends on Asp126, which acts as the Proton acceptor. Arg128 functions as the Nucleophile in the catalytic mechanism. Residues Thr149 and Lys154 each coordinate GTP.

This sequence belongs to the GTP cyclohydrolase II family. Zn(2+) is required as a cofactor.

The enzyme catalyses GTP + 4 H2O = 2,5-diamino-6-hydroxy-4-(5-phosphoribosylamino)-pyrimidine + formate + 2 phosphate + 3 H(+). It functions in the pathway cofactor biosynthesis; riboflavin biosynthesis; 5-amino-6-(D-ribitylamino)uracil from GTP: step 1/4. Catalyzes the conversion of GTP to 2,5-diamino-6-ribosylamino-4(3H)-pyrimidinone 5'-phosphate (DARP), formate and pyrophosphate. In Baumannia cicadellinicola subsp. Homalodisca coagulata, this protein is GTP cyclohydrolase-2.